A 172-amino-acid polypeptide reads, in one-letter code: Translocon-associated protein subunit delta (172 aa).

The signal sequence occupies residues 1–24 (MAALASLGALALLLLSGLSCCSEA). Residues cysteine 25 and cysteine 56 are joined by a disulfide bond. The Lumenal portion of the chain corresponds to 25–143 (CVEPQITPSY…SVDHRGTWNG (119 aa)). Lysine 72 participates in a covalent cross-link: Glycyl lysine isopeptide (Lys-Gly) (interchain with G-Cter in ubiquitin). Residues 144–164 (PWVSTEVLAAAIGLVIYYLAF) form a helical membrane-spanning segment. Residues 165–172 (SAKSHIQA) lie on the Cytoplasmic side of the membrane.

It belongs to the TRAP-delta family. As to quaternary structure, heterotetramer of TRAP-alpha, TRAP-beta, TRAP-delta and TRAP-gamma.

The protein localises to the endoplasmic reticulum membrane. In terms of biological role, TRAP proteins are part of a complex whose function is to bind calcium to the ER membrane and thereby regulate the retention of ER resident proteins. In Bos taurus (Bovine), this protein is Translocon-associated protein subunit delta (SSR4).